Consider the following 484-residue polypeptide: 3-isopropylmalate dehydratase large subunit (484 aa).

[4Fe-4S] cluster is bound by residues C352, C412, and C415. The tract at residues 462 to 484 is disordered; sequence GTLSSPSDLDPAPESAAVSSSAA.

The protein belongs to the aconitase/IPM isomerase family. LeuC type 1 subfamily. Heterodimer of LeuC and LeuD. [4Fe-4S] cluster serves as cofactor.

The enzyme catalyses (2R,3S)-3-isopropylmalate = (2S)-2-isopropylmalate. It participates in amino-acid biosynthesis; L-leucine biosynthesis; L-leucine from 3-methyl-2-oxobutanoate: step 2/4. Catalyzes the isomerization between 2-isopropylmalate and 3-isopropylmalate, via the formation of 2-isopropylmaleate. In Arthrobacter sp. (strain FB24), this protein is 3-isopropylmalate dehydratase large subunit.